The primary structure comprises 323 residues: Elongation factor P--(R)-beta-lysine ligase (323 aa).

A substrate-binding site is contributed by 74–76; it reads SPE. ATP is bound by residues 98–100 and N107; that span reads RNE. Position 116 (Y116) interacts with substrate. 242-243 contacts ATP; sequence EL. Residue E249 coordinates substrate. G298 provides a ligand contact to ATP.

This sequence belongs to the class-II aminoacyl-tRNA synthetase family. EpmA subfamily. As to quaternary structure, homodimer.

The enzyme catalyses D-beta-lysine + L-lysyl-[protein] + ATP = N(6)-((3R)-3,6-diaminohexanoyl)-L-lysyl-[protein] + AMP + diphosphate + H(+). Functionally, with EpmB is involved in the beta-lysylation step of the post-translational modification of translation elongation factor P (EF-P). Catalyzes the ATP-dependent activation of (R)-beta-lysine produced by EpmB, forming a lysyl-adenylate, from which the beta-lysyl moiety is then transferred to the epsilon-amino group of a conserved specific lysine residue in EF-P. This chain is Elongation factor P--(R)-beta-lysine ligase, found in Vibrio campbellii (strain ATCC BAA-1116).